A 587-amino-acid polypeptide reads, in one-letter code: ATP-dependent zinc metalloprotease FtsH 2 (587 aa).

Topologically, residues 1–12 are cytoplasmic; sequence MSSDRTREVTKR. Residues 13–33 form a helical membrane-spanning segment; the sequence is ILMVLFGLWLLQFFFLPPLTT. The Extracellular portion of the chain corresponds to 34–102; sequence RPTELSYSAF…EQRYEVTRTP (69 aa). The chain crosses the membrane as a helical span at residues 103–123; the sequence is WWVTLLPTVLWLAVMVGLFAW. Over 124–587 the chain is Cytoplasmic; it reads AQKRQAGAFG…GDDVRRILSA (464 aa). 192 to 199 lines the ATP pocket; the sequence is GPPGTGKT. Position 416 (His416) interacts with Zn(2+). The active site involves Glu417. Zn(2+) contacts are provided by His420 and Asp492.

The protein in the central section; belongs to the AAA ATPase family. In the C-terminal section; belongs to the peptidase M41 family. Homohexamer. Requires Zn(2+) as cofactor.

Its subcellular location is the cell membrane. In terms of biological role, acts as a processive, ATP-dependent zinc metallopeptidase for both cytoplasmic and membrane proteins. Plays a role in the quality control of integral membrane proteins. In Symbiobacterium thermophilum (strain DSM 24528 / JCM 14929 / IAM 14863 / T), this protein is ATP-dependent zinc metalloprotease FtsH 2.